Consider the following 207-residue polypeptide: Small ribosomal subunit protein uS4 (207 aa).

Residues 97-165 (SRLDNLVFRM…VKLALESKAV (69 aa)) form the S4 RNA-binding domain.

Belongs to the universal ribosomal protein uS4 family. Part of the 30S ribosomal subunit. Contacts protein S5. The interaction surface between S4 and S5 is involved in control of translational fidelity.

Functionally, one of the primary rRNA binding proteins, it binds directly to 16S rRNA where it nucleates assembly of the body of the 30S subunit. With S5 and S12 plays an important role in translational accuracy. This chain is Small ribosomal subunit protein uS4, found in Mycoplasmoides gallisepticum (strain R(low / passage 15 / clone 2)) (Mycoplasma gallisepticum).